The sequence spans 352 residues: Histidinol-phosphate aminotransferase 1 (352 aa).

At Lys211 the chain carries N6-(pyridoxal phosphate)lysine.

It belongs to the class-II pyridoxal-phosphate-dependent aminotransferase family. Histidinol-phosphate aminotransferase subfamily. Homodimer. Pyridoxal 5'-phosphate serves as cofactor.

It carries out the reaction L-histidinol phosphate + 2-oxoglutarate = 3-(imidazol-4-yl)-2-oxopropyl phosphate + L-glutamate. The protein operates within amino-acid biosynthesis; L-histidine biosynthesis; L-histidine from 5-phospho-alpha-D-ribose 1-diphosphate: step 7/9. The sequence is that of Histidinol-phosphate aminotransferase 1 from Haemophilus influenzae (strain 86-028NP).